Reading from the N-terminus, the 355-residue chain is RNA 3'-terminal phosphate cyclase (355 aa).

ATP contacts are provided by residues glutamine 109 and 291–295 (HLADQ). Histidine 316 functions as the Tele-AMP-histidine intermediate in the catalytic mechanism.

This sequence belongs to the RNA 3'-terminal cyclase family. Type 1 subfamily.

Its subcellular location is the cytoplasm. The catalysed reaction is a 3'-end 3'-phospho-ribonucleotide-RNA + ATP = a 3'-end 2',3'-cyclophospho-ribonucleotide-RNA + AMP + diphosphate. Its function is as follows. Catalyzes the conversion of 3'-phosphate to a 2',3'-cyclic phosphodiester at the end of RNA. The mechanism of action of the enzyme occurs in 3 steps: (A) adenylation of the enzyme by ATP; (B) transfer of adenylate to an RNA-N3'P to produce RNA-N3'PP5'A; (C) and attack of the adjacent 2'-hydroxyl on the 3'-phosphorus in the diester linkage to produce the cyclic end product. The biological role of this enzyme is unknown but it is likely to function in some aspects of cellular RNA processing. This is RNA 3'-terminal phosphate cyclase from Koribacter versatilis (strain Ellin345).